The primary structure comprises 92 residues: Small ribosomal subunit protein uS19 (92 aa).

Belongs to the universal ribosomal protein uS19 family.

Protein S19 forms a complex with S13 that binds strongly to the 16S ribosomal RNA. The chain is Small ribosomal subunit protein uS19 from Corynebacterium urealyticum (strain ATCC 43042 / DSM 7109).